The primary structure comprises 82 residues: Large ribosomal subunit protein eL14 (82 aa).

It belongs to the eukaryotic ribosomal protein eL14 family.

In Pyrococcus abyssi (strain GE5 / Orsay), this protein is Large ribosomal subunit protein eL14.